The sequence spans 176 residues: Transmembrane protein 238 (176 aa).

Residues 1–22 (MAAAPAVCASQGSPPGAPSAPA) form a disordered region. The Cytoplasmic segment spans residues 1-36 (MAAAPAVCASQGSPPGAPSAPAAAPAPAAGLGRCRM). A compositionally biased stretch (low complexity) spans 9 to 22 (ASQGSPPGAPSAPA). A helical membrane pass occupies residues 37–57 (ALLLAVALDVAGMAALLTGVF). The Extracellular portion of the chain corresponds to 58–69 (AQLQVRGRDFGD). Residues 70 to 90 (LLIYSGALLVFLSLLGWILWY) form a helical membrane-spanning segment. Residues 91 to 176 (TGNIEISRQE…GPGAAGAGSE (86 aa)) lie on the Cytoplasmic side of the membrane. Low complexity predominate over residues 124–137 (SAPAAAGQRPAPGS). Residues 124–157 (SAPAAAGQRPAPGSRRARRAARAPPPPAAGSRRV) form a disordered region. At serine 175 the chain carries Phosphoserine.

It localises to the membrane. The chain is Transmembrane protein 238 (TMEM238) from Homo sapiens (Human).